A 192-amino-acid polypeptide reads, in one-letter code: UPF0149 protein YPO0911/y3298/YP_3608 (192 aa).

The protein belongs to the UPF0149 family.

In Yersinia pestis, this protein is UPF0149 protein YPO0911/y3298/YP_3608.